Consider the following 391-residue polypeptide: Metal tolerance protein 7 (391 aa).

The tract at residues 1 to 21 (MGSRGRRGGGERETETEEDET) is disordered. Residues 1–103 (MGSRGRRGGG…LRQMAKGERL (103 aa)) lie on the Cytoplasmic side of the membrane. Residues 104–124 (AINLSNIINLILFIGKVLASV) form a helical membrane-spanning segment. At 125-134 (ESLSMAVIAS) the chain is on the vacuolar side. Residues 135–155 (TLDSLLDLLSGFILWFTAHAM) form a helical membrane-spanning segment. The Cytoplasmic portion of the chain corresponds to 156–171 (KKPNKYSYPIGKRRMQ). Residues 172–192 (PVGIIVFASVMGTLGFQVLIE) traverse the membrane as a helical segment. The Vacuolar segment spans residues 193–210 (SGRQLITNEHQVFDHRKE). A helical membrane pass occupies residues 211–231 (LWMIGSMSSVAVVKFFLMLYC). At 232 to 246 (RSFKNEIVRAYAQDH) the chain is on the cytoplasmic side. A helical membrane pass occupies residues 247 to 264 (FFDVITNSVGLVSALLAV). Topologically, residues 265 to 266 (RY) are vacuolar. Residues 267 to 287 (KWWMDPVGAILIAVYTITTWA) traverse the membrane as a helical segment. Topologically, residues 288–391 (RTVVENVGTL…THRPEHKAEV (104 aa)) are cytoplasmic.

Belongs to the cation diffusion facilitator (CDF) transporter (TC 2.A.4) family. SLC30A subfamily.

It is found in the vacuole membrane. Its function is as follows. Involved in sequestration of excess metal in the cytoplasm into vacuoles to maintain metal homeostasis. This Oryza sativa subsp. japonica (Rice) protein is Metal tolerance protein 7 (MTP7).